A 165-amino-acid chain; its full sequence is E3 ubiquitin ligase complex SCF subunit sconC (165 aa).

Positions 106–165 (ILAANYLDIKALLDVGCKTVANMIKGKSPEEIRKTFNIQNDFTPEEEDQIRRENEWAEDR) are interaction with the F-box domain of F-box proteins.

Belongs to the SKP1 family. Component of the SCF (SKP1-CUL1-F-box protein) E3 ubiquitin ligase complexes.

The protein operates within protein modification; protein ubiquitination. Essential component of the SCF (SKP1-CUL1-F-box protein) E3 ubiquitin ligase complexes, which mediate the ubiquitination and subsequent proteasomal degradation of target proteins. Controls sulfur metabolite repression, probably by mediating the inactivation or degradation of the metR transcription factor. The polypeptide is E3 ubiquitin ligase complex SCF subunit sconC (sconC) (Arthroderma otae (Microsporum canis)).